The chain runs to 281 residues: 2,3,4,5-tetrahydropyridine-2,6-dicarboxylate N-succinyltransferase (281 aa).

Substrate-binding residues include arginine 108 and aspartate 145.

It belongs to the transferase hexapeptide repeat family. Homotrimer.

Its subcellular location is the cytoplasm. The catalysed reaction is (S)-2,3,4,5-tetrahydrodipicolinate + succinyl-CoA + H2O = (S)-2-succinylamino-6-oxoheptanedioate + CoA. Its pathway is amino-acid biosynthesis; L-lysine biosynthesis via DAP pathway; LL-2,6-diaminopimelate from (S)-tetrahydrodipicolinate (succinylase route): step 1/3. This chain is 2,3,4,5-tetrahydropyridine-2,6-dicarboxylate N-succinyltransferase, found in Methylobacterium nodulans (strain LMG 21967 / CNCM I-2342 / ORS 2060).